We begin with the raw amino-acid sequence, 358 residues long: 3-isopropylmalate dehydrogenase (358 aa).

NAD(+) is bound at residue 79–92 (GPKWEHLPPDEQPE). Substrate contacts are provided by R100, R110, R139, and D227. The Mg(2+) site is built by D227, D251, and D255. 285 to 297 (GSAPDIAGKGVAN) is an NAD(+) binding site.

It belongs to the isocitrate and isopropylmalate dehydrogenases family. LeuB type 1 subfamily. As to quaternary structure, homodimer. Mg(2+) is required as a cofactor. The cofactor is Mn(2+).

Its subcellular location is the cytoplasm. The enzyme catalyses (2R,3S)-3-isopropylmalate + NAD(+) = 4-methyl-2-oxopentanoate + CO2 + NADH. The protein operates within amino-acid biosynthesis; L-leucine biosynthesis; L-leucine from 3-methyl-2-oxobutanoate: step 3/4. Functionally, catalyzes the oxidation of 3-carboxy-2-hydroxy-4-methylpentanoate (3-isopropylmalate) to 3-carboxy-4-methyl-2-oxopentanoate. The product decarboxylates to 4-methyl-2 oxopentanoate. The chain is 3-isopropylmalate dehydrogenase from Pseudoalteromonas translucida (strain TAC 125).